A 196-amino-acid polypeptide reads, in one-letter code: Ribosome maturation factor RimP (196 aa).

Residues 131–145 (KKKAGKKSQGKKAGK) are compositionally biased toward basic residues. Residues 131-153 (KKKAGKKSQGKKAGKKTPQAPVQ) are disordered.

The protein belongs to the RimP family.

It is found in the cytoplasm. Required for maturation of 30S ribosomal subunits. In Corynebacterium urealyticum (strain ATCC 43042 / DSM 7109), this protein is Ribosome maturation factor RimP.